The chain runs to 46 residues: DNA-directed RNA polymerase subunit Rpo12 (46 aa).

Zn(2+) is bound by residues C8, C23, and C26.

It belongs to the archaeal Rpo12/eukaryotic RPC10 RNA polymerase subunit family. As to quaternary structure, part of the RNA polymerase complex. Requires Zn(2+) as cofactor.

Its subcellular location is the cytoplasm. It catalyses the reaction RNA(n) + a ribonucleoside 5'-triphosphate = RNA(n+1) + diphosphate. Its function is as follows. DNA-dependent RNA polymerase (RNAP) catalyzes the transcription of DNA into RNA using the four ribonucleoside triphosphates as substrates. This chain is DNA-directed RNA polymerase subunit Rpo12, found in Archaeoglobus fulgidus (strain ATCC 49558 / DSM 4304 / JCM 9628 / NBRC 100126 / VC-16).